The chain runs to 92 residues: Acylphosphatase (92 aa).

The Acylphosphatase-like domain occupies 3–90 (RVHVLVAGRV…GEFTEFAVLR (88 aa)). Active-site residues include R18 and N36.

Belongs to the acylphosphatase family.

It carries out the reaction an acyl phosphate + H2O = a carboxylate + phosphate + H(+). The chain is Acylphosphatase (acyP) from Methylococcus capsulatus (strain ATCC 33009 / NCIMB 11132 / Bath).